A 354-amino-acid polypeptide reads, in one-letter code: Protein NDH-DEPENDENT CYCLIC ELECTRON FLOW 5 (354 aa).

The N-terminal 49 residues, 1–49, are a transit peptide targeting the chloroplast; that stretch reads MALVHYMNVSRSTFPLSRSSKINLSSSFASLPLQFHKNIKRLESSVPPS.

The protein localises to the plastid. The protein resides in the chloroplast thylakoid membrane. Functionally, required for both formation and activity of the chloroplast NAD(P)H dehydrogenase (NDH) complex of the photosynthetic electron transport chain. May function in assembly or stabilization of the NDH complex. The chain is Protein NDH-DEPENDENT CYCLIC ELECTRON FLOW 5 from Arabidopsis thaliana (Mouse-ear cress).